The chain runs to 959 residues: Bifunctional premutilin synthase (959 aa).

Residues 1 to 542 (MGLSEDLHAR…ALNVPIPRFD (542 aa)) are class II diterpene cyclase. Positions 309–312 (DADM) match the DXDD motif motif. Catalysis depends on D311, which acts as the For class II diterpene cyclase activity. The interval 543 to 959 (PASITTLPPI…TANGSNGIHH (417 aa)) is class I diterpene synthase. Catalysis depends on D649, which acts as the For class I diterpene synthase activity. Mg(2+)-binding residues include D649, D653, and N824. The DDXXD motif motif lies at 649 to 653 (DDYLD). The tract at residues 931 to 959 (KGANGVKKTNGLTTNGTKATANGSNGIHH) is disordered. The span at 934-959 (NGVKKTNGLTTNGTKATANGSNGIHH) shows a compositional bias: low complexity.

This sequence belongs to the terpene synthase family. Mg(2+) is required as a cofactor.

Its pathway is secondary metabolite biosynthesis; terpenoid biosynthesis. Functionally, bifunctional premutilin synthase; part of the gene cluster that mediates the biosynthesis of pleuromutilin, a tricyclic diterpene showing antibacterial properties. The geranylgeranyl diphosphate (GGPP) synthase ple4 catalyzes the first step in pleuromutilin biosynthesis. GGPP is then substrate of the premutilin synthase (PS) ple3 to yield premutilin. Premutilin synthase is a bifunctional enzyme composed of the fusion of a class II diterpene cyclase (DTC) and a class I diterpene synthase (DTS), with the corresponding domains and active sites containing characteristic aspartate-rich motifs. GGPP is first converted to mutildienyl-diphosphate (MPP) at the class II DTC site. MPP is subsequently further cyclized at the class I DTS site, followed by a 1,5-hydride shift and addition of water prior to terminating deprotonation, to yield premutilin. The cytochrome P450 monooxygenases ple5 and ple6 hydroxylate premutilin at C-11 and C-3, respectively, producing 11-hydroxypremutilin and 3-hydroxypremutilin. The combination of the actions of both ple5 and ple6 leads to the production of 3,11-dihydroxypremutilin. The short chain dehydrogenase ple7 further converts 3,11-dihydroxypremutilin into mutilin. The acetyltransferase ple2 then acetylates mutilin to produce 14-O-acetylmutilin. Finally, the cytochrome P450 monooxygenase ple1 catalyzes hydroxylation on the alpha position of the acetyl side chain of 14-O-acetylmutilin to yield pleuromutilin. The protein is Bifunctional premutilin synthase of Rhodocybe pseudopiperita (Clitopilus pseudopiperitus).